The primary structure comprises 237 residues: tRNA (guanine-N(7)-)-methyltransferase (237 aa).

S-adenosyl-L-methionine is bound by residues Glu67, Glu92, Asp119, and Asp142. The active site involves Asp142. Substrate is bound by residues Lys146, Asp178, and 215–218; that span reads TKFE.

This sequence belongs to the class I-like SAM-binding methyltransferase superfamily. TrmB family.

The catalysed reaction is guanosine(46) in tRNA + S-adenosyl-L-methionine = N(7)-methylguanosine(46) in tRNA + S-adenosyl-L-homocysteine. It participates in tRNA modification; N(7)-methylguanine-tRNA biosynthesis. In terms of biological role, catalyzes the formation of N(7)-methylguanine at position 46 (m7G46) in tRNA. In Aeromonas hydrophila subsp. hydrophila (strain ATCC 7966 / DSM 30187 / BCRC 13018 / CCUG 14551 / JCM 1027 / KCTC 2358 / NCIMB 9240 / NCTC 8049), this protein is tRNA (guanine-N(7)-)-methyltransferase.